Reading from the N-terminus, the 335-residue chain is MIEVDRIVSANAKVDDEYIDRAIRPKLLSDYIGQPQVREQMEIFIQAAKLRQDALDHLLIFGPPGLGKTTLANIVANEMGVNIRTTSGPVLEKAGDLAAMLTNLEPHDVLFIDEIHRLSPAIEEVLYPAMEDYQLDIMIGEGPAARSIKLDLPPFTLIGATTRAGSLTSPLRDRFGIVQRLEFYSVEDLASIVTRSAVCLQLEIDVEAGQEIACRSRGTPRIANRLLRRVRDYADVKNGGKITALIAQEALKMLDVDLAGFDFMDRKLLQAIIERFDGGPVGLDNLAAAIGEERDTIEDVLEPYLIQQGFLQRTPRGRIATSRTYRHFGLEQIEK.

The tract at residues 4-184 (VDRIVSANAK…FGIVQRLEFY (181 aa)) is large ATPase domain (RuvB-L). ATP contacts are provided by residues I23, R24, G65, K68, T69, T70, 131–133 (EDY), R174, Y184, and R221. T69 provides a ligand contact to Mg(2+). Positions 185 to 255 (SVEDLASIVT…IAQEALKMLD (71 aa)) are small ATPAse domain (RuvB-S). The segment at 258 to 335 (LAGFDFMDRK…RHFGLEQIEK (78 aa)) is head domain (RuvB-H). DNA is bound by residues R294, R313, and R318.

This sequence belongs to the RuvB family. In terms of assembly, homohexamer. Forms an RuvA(8)-RuvB(12)-Holliday junction (HJ) complex. HJ DNA is sandwiched between 2 RuvA tetramers; dsDNA enters through RuvA and exits via RuvB. An RuvB hexamer assembles on each DNA strand where it exits the tetramer. Each RuvB hexamer is contacted by two RuvA subunits (via domain III) on 2 adjacent RuvB subunits; this complex drives branch migration. In the full resolvosome a probable DNA-RuvA(4)-RuvB(12)-RuvC(2) complex forms which resolves the HJ.

The protein resides in the cytoplasm. The catalysed reaction is ATP + H2O = ADP + phosphate + H(+). Its function is as follows. The RuvA-RuvB-RuvC complex processes Holliday junction (HJ) DNA during genetic recombination and DNA repair, while the RuvA-RuvB complex plays an important role in the rescue of blocked DNA replication forks via replication fork reversal (RFR). RuvA specifically binds to HJ cruciform DNA, conferring on it an open structure. The RuvB hexamer acts as an ATP-dependent pump, pulling dsDNA into and through the RuvAB complex. RuvB forms 2 homohexamers on either side of HJ DNA bound by 1 or 2 RuvA tetramers; 4 subunits per hexamer contact DNA at a time. Coordinated motions by a converter formed by DNA-disengaged RuvB subunits stimulates ATP hydrolysis and nucleotide exchange. Immobilization of the converter enables RuvB to convert the ATP-contained energy into a lever motion, pulling 2 nucleotides of DNA out of the RuvA tetramer per ATP hydrolyzed, thus driving DNA branch migration. The RuvB motors rotate together with the DNA substrate, which together with the progressing nucleotide cycle form the mechanistic basis for DNA recombination by continuous HJ branch migration. Branch migration allows RuvC to scan DNA until it finds its consensus sequence, where it cleaves and resolves cruciform DNA. The chain is Holliday junction branch migration complex subunit RuvB from Histophilus somni (strain 129Pt) (Haemophilus somnus).